Reading from the N-terminus, the 276-residue chain is Large ribosomal subunit protein uL2c (276 aa).

Disordered regions lie at residues 1–51 (MAIR…GIIT) and 224–276 (VVMN…RRRK). Polar residues-rich tracts occupy residues 7–18 (RTYTPSTRNRPI) and 27–37 (SNPQKKLTSGQ).

Belongs to the universal ribosomal protein uL2 family. As to quaternary structure, part of the 50S ribosomal subunit.

The protein localises to the plastid. The protein resides in the chloroplast. In Cycas taitungensis (Prince sago), this protein is Large ribosomal subunit protein uL2c (rpl2).